The following is a 170-amino-acid chain: Large ribosomal subunit protein uL10 (170 aa).

Belongs to the universal ribosomal protein uL10 family. Part of the ribosomal stalk of the 50S ribosomal subunit. The N-terminus interacts with L11 and the large rRNA to form the base of the stalk. The C-terminus forms an elongated spine to which L12 dimers bind in a sequential fashion forming a multimeric L10(L12)X complex.

Forms part of the ribosomal stalk, playing a central role in the interaction of the ribosome with GTP-bound translation factors. The chain is Large ribosomal subunit protein uL10 (rplJ) from Chlamydia pneumoniae (Chlamydophila pneumoniae).